Reading from the N-terminus, the 165-residue chain is Shikimate kinase (165 aa).

11-16 contacts ATP; it reads GAGKTT. A Mg(2+)-binding site is contributed by Thr-15. Residues Asp-33, Arg-57, and Gly-78 each contribute to the substrate site. Arg-116 lines the ATP pocket. Residue Arg-134 participates in substrate binding.

This sequence belongs to the shikimate kinase family. As to quaternary structure, monomer. It depends on Mg(2+) as a cofactor.

The protein localises to the cytoplasm. The catalysed reaction is shikimate + ATP = 3-phosphoshikimate + ADP + H(+). It functions in the pathway metabolic intermediate biosynthesis; chorismate biosynthesis; chorismate from D-erythrose 4-phosphate and phosphoenolpyruvate: step 5/7. In terms of biological role, catalyzes the specific phosphorylation of the 3-hydroxyl group of shikimic acid using ATP as a cosubstrate. In Bacillus cereus (strain AH187), this protein is Shikimate kinase.